Here is a 402-residue protein sequence, read N- to C-terminus: Sulfate adenylyltransferase (402 aa).

It belongs to the sulfate adenylyltransferase family.

It catalyses the reaction sulfate + ATP + H(+) = adenosine 5'-phosphosulfate + diphosphate. It participates in sulfur metabolism; hydrogen sulfide biosynthesis; sulfite from sulfate: step 1/3. The polypeptide is Sulfate adenylyltransferase (Thiobacillus denitrificans (strain ATCC 25259 / T1)).